A 308-amino-acid chain; its full sequence is Pantothenate kinase (308 aa).

Glycine 91–serine 98 provides a ligand contact to ATP.

The protein belongs to the prokaryotic pantothenate kinase family.

It localises to the cytoplasm. It catalyses the reaction (R)-pantothenate + ATP = (R)-4'-phosphopantothenate + ADP + H(+). The protein operates within cofactor biosynthesis; coenzyme A biosynthesis; CoA from (R)-pantothenate: step 1/5. In Lacticaseibacillus paracasei (strain ATCC 334 / BCRC 17002 / CCUG 31169 / CIP 107868 / KCTC 3260 / NRRL B-441) (Lactobacillus paracasei), this protein is Pantothenate kinase.